Here is a 202-residue protein sequence, read N- to C-terminus: Imidazoleglycerol-phosphate dehydratase (202 aa).

The protein belongs to the imidazoleglycerol-phosphate dehydratase family.

It localises to the cytoplasm. It catalyses the reaction D-erythro-1-(imidazol-4-yl)glycerol 3-phosphate = 3-(imidazol-4-yl)-2-oxopropyl phosphate + H2O. The protein operates within amino-acid biosynthesis; L-histidine biosynthesis; L-histidine from 5-phospho-alpha-D-ribose 1-diphosphate: step 6/9. This is Imidazoleglycerol-phosphate dehydratase from Synechococcus sp. (strain CC9605).